Reading from the N-terminus, the 234-residue chain is Carboxy-S-adenosyl-L-methionine synthase (234 aa).

Residues tyrosine 35, 60–62 (GCS), 83–84 (DN), 109–110 (DI), asparagine 124, and arginine 191 each bind S-adenosyl-L-methionine.

The protein belongs to the class I-like SAM-binding methyltransferase superfamily. Cx-SAM synthase family. In terms of assembly, homodimer.

It catalyses the reaction prephenate + S-adenosyl-L-methionine = carboxy-S-adenosyl-L-methionine + 3-phenylpyruvate + H2O. Functionally, catalyzes the conversion of S-adenosyl-L-methionine (SAM) to carboxy-S-adenosyl-L-methionine (Cx-SAM). This chain is Carboxy-S-adenosyl-L-methionine synthase, found in Campylobacter concisus (strain 13826).